Consider the following 494-residue polypeptide: Voltage-gated potassium channel regulatory subunit KCNF1 (494 aa).

The Cytoplasmic segment spans residues 1–183 (MDGSGERSLP…KPESSCPARV (183 aa)). A helical transmembrane segment spans residues 184-204 (VAVLSFLLILVSSVVMCMGTI). Residues 224-244 (NVETACIGWFTLEYLLRLFSS) traverse the membrane as a helical segment. Residues 245-249 (PNKLH) are Cytoplasmic-facing. A helical membrane pass occupies residues 250–270 (FALSFMNIVDVLAILPFYVSL). A helical; Voltage-sensor membrane pass occupies residues 290-310 (QALRIMRIARIFKLARHSSGL). The Cytoplasmic segment spans residues 311–324 (QTLTYALKRSFKEL). Residues 325 to 345 (GLLLMYLAVGIFVFSALGYTM) form a helical membrane-spanning segment. The pore-forming intramembrane region spans 358-378 (PQSFWWAIITMTTVGYGDIYP). The Selectivity filter motif lies at 370-375 (TVGYGD). Residues 386-406 (NAAISFLCGVIAIALPIHPII) form a helical membrane-spanning segment. The Cytoplasmic segment spans residues 407–494 (NNFVRYYNKQ…HHRTRLQSCK (88 aa)). The interval 433-469 (NSSSGGEGKTGGSRSDLDNLPPEPAGKEAPSCSSRLK) is disordered.

This sequence belongs to the potassium channel family. F (TC 1.A.1.2) subfamily. Kv5.1/KCNF1 sub-subfamily. As to quaternary structure, heterotetramer with KCNB1 or KCNB2. As to expression, detected in heart, brain, liver, skeletal muscle, kidney and pancreas.

Its subcellular location is the cell membrane. Its function is as follows. Regulatory alpha-subunit of the voltage-gated potassium (Kv) channel which, when coassembled with KCNB1 or KCNB2, can modulate their expression and their gating kinetics by acting on deactivation upon repolarization and inactivation during maintained depolarization. Accelerates inactivation but has relatively little effect on deactivation. Coexpression with KCNB1 or KCNB2 markedly slows inactivation. Each modulatory subunit has its own specific properties of regulation, and can lead to extensive inhibitions, to large changes in kinetics, and/or to large shifts in the voltage dependencies of the inactivation process. The gating kinetics depends on the nature and stoichiometry of the associated regulatory sunbunit. Fails to produce a potassium current when expressed alone. The sequence is that of Voltage-gated potassium channel regulatory subunit KCNF1 from Homo sapiens (Human).